A 189-amino-acid polypeptide reads, in one-letter code: Transcription factor E (189 aa).

An HTH TFE/IIEalpha-type domain is found at Ala9–Asn101.

The protein belongs to the TFE family. Monomer. Interaction with RNA polymerase subunits RpoF and RpoE is necessary for Tfe stimulatory transcription activity. Able to interact with Tbp and RNA polymerase in the absence of DNA promoter. Interacts both with the preinitiation and elongation complexes.

Functionally, transcription factor that plays a role in the activation of archaeal genes transcribed by RNA polymerase. Facilitates transcription initiation by enhancing TATA-box recognition by TATA-box-binding protein (Tbp), and transcription factor B (Tfb) and RNA polymerase recruitment. Not absolutely required for transcription in vitro, but particularly important in cases where Tbp or Tfb function is not optimal. It dynamically alters the nucleic acid-binding properties of RNA polymerases by stabilizing the initiation complex and destabilizing elongation complexes. Seems to translocate with the RNA polymerase following initiation and acts by binding to the non template strand of the transcription bubble in elongation complexes. The protein is Transcription factor E of Aeropyrum pernix (strain ATCC 700893 / DSM 11879 / JCM 9820 / NBRC 100138 / K1).